We begin with the raw amino-acid sequence, 135 residues long: T-cell receptor gamma chain V region 5/10-13 (135 aa).

An N-terminal signal peptide occupies residues 1 to 18 (MLLLRWPTFCCLWVFGLG). The segment at 19 to 114 (QLEQTELSVT…DEATYYCAVC (96 aa)) is v segment. The j segment stretch occupies residues 115–135 (RSGTSWVKIFAKGTKLVVIPP).

The polypeptide is T-cell receptor gamma chain V region 5/10-13 (Tcrg-V1) (Mus musculus (Mouse)).